Consider the following 870-residue polypeptide: Dynamin-2 (870 aa).

Residues 28–294 (HLDLPQIAVV…LTNHIRESLP (267 aa)) form the Dynamin-type G domain. The G1 motif stretch occupies residues 38–45 (GGQSAGKS). The GDP site is built by serine 41, glycine 43, lysine 44, serine 45, serine 46, arginine 59, and glycine 60. Residues 64–66 (VTR) form a G2 motif region. Residues 136–139 (DLPG) form a G3 motif region. Residues 205–208 (TKLD) are G4 motif. GDP is bound by residues lysine 206, aspartate 208, and aspartate 211. Tyrosine 231 is modified (phosphotyrosine; by SRC). Residues 235 to 238 (VNRS) are G5 motif. Positions 236, 237, and 239 each coordinate GDP. At lysine 299 the chain carries N6-acetyllysine. Residues 519–625 (LVIRRGWLTI…WKASFLRAGV (107 aa)) enclose the PH domain. The residue at position 597 (tyrosine 597) is a Phosphotyrosine; by SRC. The residue at position 598 (lysine 598) is an N6-acetyllysine. In terms of domain architecture, GED spans 653-744 (VETIRNLVDS…IIGDISTSTV (92 aa)). A disordered region spans residues 741-870 (TSTVSTPVPP…IRPAEPSLLD (130 aa)). Threonine 755 bears the Phosphothreonine mark. Polar residues predominate over residues 756–767 (WLQSASSHSPTP). A Phosphoserine; by CDK1 modification is found at serine 764. Residues 796 to 806 (VPVGAAASFSA) show a composition bias toward low complexity. A compositionally biased stretch (pro residues) spans 826-855 (PAPPQIPSRPVRIPPGIPPGVPSRRPPAAP). Serine 848 carries the phosphoserine; by GSK3-alpha modification.

This sequence belongs to the TRAFAC class dynamin-like GTPase superfamily. Dynamin/Fzo/YdjA family. Oligomerizes into a helical polymer that self-assembles around the vesicle membrane, when associated to the menbrane through lipid binding. Interacts with SHANK1 and SHANK2. Interacts with SNX9. Interacts (via C-terminal proline-rich domain (PRD)) with SNX18 (via SH3 domain); this interaction regulates ATG9A and ATG16L1 trafficking from recycling endosomes to sites of autophagosome formation. Interacts with SNX33 (via SH3 domain). Interacts with MYO1E (via SH3 domain). Interacts with PSTPIP1 (via SH3 domain). Interacts with CTNND2. Interacts (via C-terminal proline-rich domain (PRD)) with BIN1 (via SH3 domain); this interaction allows the recruitment of DNM2 to the membrane tubules and inhibits self-assembly-stimulated GTPase activity on the membrane. Interacts with GABARAP, GABARAPL1 and GABARAPL2. Interacts with MAP1LC3B (the lipidate and non-lipidated LC3 form); this interaction mediates recycling endosome scission leading to autophagosome release. Interacts with ITSN1. Interacts (via C-terminal proline-rich domain (PRD)) with SH3BP4 (via SH3 domain); this interaction controls the GTPase activity and is prevented by EGFR-induced tyrosine phosphorylation of either DNM2 or SH3BP4. May interact with PIK3C3. May be a component of a complex composed of RAB5A (in GDP-bound form), DYN2 and PIK3C3. Interacts with SDC4; this interaction is markedly enhanced at focal ahesion site upon induction of focal adhesions and stress-fiber formation. Interacts with ACTN1. Interacts with CTTN; this interaction stimulates the intrinsic GTPase activity of DNM2 and stabilizes the association of DNM2 and actin filaments; in addition this interaction is stimulated by ligand binding to the receptor, leading to the recruitment of the DNM2-CTTN complex to the sequestered receptor-ligand complex to its internalization. Interacts with NOSTRIN (via SH3 domain); this interaction allows the recruitment of NOS3 to dynamin-positive structures. Interacts with TUBG1; this interaction may participate in centrosome cohesion. Phosphorylation at Ser-848 by GSK3-alpha relieves the inhibition of BIN1 and promotes endocytosis. Phosphorylation at Ser-764 by CDK1 is greatly increased upon mitotic entry. It regulates cytokinesis downstream of calcineurin, and does not affect clathrin-mediated endocytosis. Dephosphorylated by calcineurin/PP2 during cytokinesis in a Ca(2+)- and calmodulin-dependent manner. Phosphorylated on tyrosine residues by EGFR and after activation of SRC. As to expression, widely expressed. Expressed in skeletal muscle and the peripheral nerve.

It localises to the cytoplasm. The protein localises to the cytoskeleton. It is found in the cytoplasmic vesicle. Its subcellular location is the clathrin-coated vesicle. The protein resides in the cell projection. It localises to the uropodium. The protein localises to the endosome. It is found in the microtubule organizing center. Its subcellular location is the centrosome. The protein resides in the centriole. It localises to the recycling endosome. The protein localises to the phagocytic cup. It is found in the phagosome membrane. Its subcellular location is the podosome. The protein resides in the cell junction. It localises to the postsynaptic density. The protein localises to the synapse. It is found in the synaptosome. Its subcellular location is the midbody. The protein resides in the membrane. It localises to the clathrin-coated pit. It carries out the reaction GTP + H2O = GDP + phosphate + H(+). Catalyzes the hydrolysis of GTP and utilizes this energy to mediate vesicle scission at plasma membrane during endocytosis and filament remodeling at many actin structures during organization of the actin cytoskeleton. Plays an important role in vesicular trafficking processes, namely clathrin-mediated endocytosis (CME), exocytic and clathrin-coated vesicle from the trans-Golgi network, and PDGF stimulated macropinocytosis. During vesicular trafficking process, associates to the membrane, through lipid binding, and self-assembles into ring-like structure through oligomerization to form a helical polymer around the vesicle membrane and leading to vesicle scission. Plays a role in organization of the actin cytoskeleton by mediating arrangement of stress fibers and actin bundles in podocytes. During organization of the actin cytoskeleton, self-assembles into ring-like structure that directly bundles actin filaments to form typical membrane tubules decorated with dynamin spiral polymers. Self-assembly increases GTPase activity and the GTP hydrolysis causes the rapid depolymerization of dynamin spiral polymers, and results in dispersion of actin bundles. Remodels, through its interaction with CTTN, bundled actin filaments in a GTPase-dependent manner and plays a role in orchestrating the global actomyosin cytoskeleton. The interaction with CTTN stabilizes the interaction of DNM2 and actin filaments and stimulates the intrinsic GTPase activity that results in actin filament-barbed ends and increases the sensitivity of filaments in bundles to the actin depolymerizing factor, CFL1. Plays a role in the autophagy process, by participating in the formation of ATG9A vesicles destined for the autophagosomes through its interaction with SNX18, by mediating recycling endosome scission leading to autophagosome release through MAP1LC3B interaction. Also regulates maturation of apoptotic cell corpse-containing phagosomes by recruiting PIK3C3 to the phagosome membrane. Also plays a role in cytokinesis. May participate in centrosome cohesion through its interaction with TUBG1. Plays a role in the regulation of neuron morphology, axon growth and formation of neuronal growth cones. Involved in membrane tubulation. This Homo sapiens (Human) protein is Dynamin-2.